The chain runs to 86 residues: uncharacterized protein (86 aa).

This sequence to M.jannaschii MJ1173.

This is an uncharacterized protein from Methanosarcina mazei (strain ATCC BAA-159 / DSM 3647 / Goe1 / Go1 / JCM 11833 / OCM 88) (Methanosarcina frisia).